The sequence spans 451 residues: Subtilase-type proteinase psp3 (451 aa).

Positions 1–20 (MRVSWISGLLLVAHLAPSSA) are cleaved as a signal peptide. The Inhibitor I9 domain maps to 80–161 (YIVMFKPSVD…LVEPDRVMHV (82 aa)). In terms of domain architecture, Peptidase S8 spans 169–451 (PWGLARVSHR…PNVLAFNNYE (283 aa)). Catalysis depends on charge relay system residues aspartate 205, histidine 237, and serine 394.

The protein belongs to the peptidase S8 family.

This is Subtilase-type proteinase psp3 (psp3) from Schizosaccharomyces pombe (strain 972 / ATCC 24843) (Fission yeast).